A 323-amino-acid polypeptide reads, in one-letter code: Transcription factor LUX (323 aa).

Disordered stretches follow at residues 1 to 25 (MGEEVQMSDYDVSGDGDRVSEWEMG), 53 to 139 (ERSR…DLSG), and 267 to 298 (GYHHQNHNHDPYHQNHRHHHGAGGNGAFESNP). The span at 65–87 (SETTLSSLRGGSSGPNTSSSNNN) shows a compositional bias: low complexity. A DNA-binding region (myb-like GARP) is located at residues 139 to 200 (GKTLKRPRLV…HLQKYRLYLK (62 aa)).

As to quaternary structure, interacts with ELF3 and forms a complex with ELF3 and ELF4.

The protein localises to the nucleus. Transcription factor that is essential for the generation of the circadian clock oscillation. Is necessary for activation of CCA1 and LHY expression. Is coregulated with TOC1 and seems to be repressed by CCA1 and LHY by direct binding of these proteins to the evening element in the LUX promoter. Directly regulates the expression of PRR9, a major component of the morning transcriptional feedback circuit, by binding specific sites on PRR9 promoter. Binds to its own promoter, inducing a negative auto-regulatory feedback loop within the core clock. Binds to ELF3 and associates with ELF4 in a diurnal complex which is required for the expression of the growth-promoting transcription factors PIF4 and PIF5 and subsequent hypocotyl growth in the early evening. The sequence is that of Transcription factor LUX (LUX) from Arabidopsis thaliana (Mouse-ear cress).